The following is a 96-amino-acid chain: Muconolactone Delta-isomerase 1 (96 aa).

The protein belongs to the muconolactone Delta-isomerase family. Homodecamer.

It carries out the reaction (S)-muconolactone = (4,5-dihydro-5-oxofuran-2-yl)-acetate. It participates in aromatic compound metabolism; beta-ketoadipate pathway; 5-oxo-4,5-dihydro-2-furylacetate from catechol: step 3/3. The protein is Muconolactone Delta-isomerase 1 (catC1) of Acinetobacter lwoffii.